A 135-amino-acid chain; its full sequence is 6,7-dimethyl-8-ribityllumazine synthase (135 aa).

Residues phenylalanine 12, 44–46, and 68–70 contribute to the 5-amino-6-(D-ribitylamino)uracil site; these read AYD and CVI. A (2S)-2-hydroxy-3-oxobutyl phosphate-binding site is contributed by 73–74; it reads AT. The Proton donor role is filled by histidine 76. Position 101 (leucine 101) interacts with 5-amino-6-(D-ribitylamino)uracil. Arginine 116 is a binding site for (2S)-2-hydroxy-3-oxobutyl phosphate.

Belongs to the DMRL synthase family.

It carries out the reaction (2S)-2-hydroxy-3-oxobutyl phosphate + 5-amino-6-(D-ribitylamino)uracil = 6,7-dimethyl-8-(1-D-ribityl)lumazine + phosphate + 2 H2O + H(+). Its pathway is cofactor biosynthesis; riboflavin biosynthesis; riboflavin from 2-hydroxy-3-oxobutyl phosphate and 5-amino-6-(D-ribitylamino)uracil: step 1/2. Its function is as follows. Catalyzes the formation of 6,7-dimethyl-8-ribityllumazine by condensation of 5-amino-6-(D-ribitylamino)uracil with 3,4-dihydroxy-2-butanone 4-phosphate. This is the penultimate step in the biosynthesis of riboflavin. The polypeptide is 6,7-dimethyl-8-ribityllumazine synthase (Methanoculleus marisnigri (strain ATCC 35101 / DSM 1498 / JR1)).